The chain runs to 283 residues: Acetyl-coenzyme A carboxylase carboxyl transferase subunit beta (283 aa).

Residues 23-283 enclose the CoA carboxyltransferase N-terminal domain; the sequence is LWIKCPSCSE…DFLMAGKAAA (261 aa). Residues cysteine 27, cysteine 30, cysteine 46, and cysteine 49 each coordinate Zn(2+). A C4-type zinc finger spans residues 27-49; that stretch reads CPSCSEMLFTKEYEDNLSVCPHC.

The protein belongs to the AccD/PCCB family. In terms of assembly, acetyl-CoA carboxylase is a heterohexamer composed of biotin carboxyl carrier protein (AccB), biotin carboxylase (AccC) and two subunits each of ACCase subunit alpha (AccA) and ACCase subunit beta (AccD). Zn(2+) is required as a cofactor.

It localises to the cytoplasm. The enzyme catalyses N(6)-carboxybiotinyl-L-lysyl-[protein] + acetyl-CoA = N(6)-biotinyl-L-lysyl-[protein] + malonyl-CoA. It participates in lipid metabolism; malonyl-CoA biosynthesis; malonyl-CoA from acetyl-CoA: step 1/1. Its function is as follows. Component of the acetyl coenzyme A carboxylase (ACC) complex. Biotin carboxylase (BC) catalyzes the carboxylation of biotin on its carrier protein (BCCP) and then the CO(2) group is transferred by the transcarboxylase to acetyl-CoA to form malonyl-CoA. The polypeptide is Acetyl-coenzyme A carboxylase carboxyl transferase subunit beta (Novosphingobium aromaticivorans (strain ATCC 700278 / DSM 12444 / CCUG 56034 / CIP 105152 / NBRC 16084 / F199)).